The sequence spans 402 residues: Serine/threonine transporter SstT (402 aa).

9 consecutive transmembrane segments (helical) span residues 19-39 (IGVV…AIGL), 43-63 (LFVG…VISA), 86-106 (TFAA…TLIL), 138-158 (AITE…GLAM), 179-199 (VVKW…FTSI), 212-232 (LLIL…NPII), 287-307 (IPLG…ILTL), 327-347 (VVAA…LLLI), and 354-374 (FGIS…VGVI).

This sequence belongs to the dicarboxylate/amino acid:cation symporter (DAACS) (TC 2.A.23) family.

The protein resides in the cell membrane. It catalyses the reaction L-serine(in) + Na(+)(in) = L-serine(out) + Na(+)(out). The catalysed reaction is L-threonine(in) + Na(+)(in) = L-threonine(out) + Na(+)(out). In terms of biological role, involved in the import of serine and threonine into the cell, with the concomitant import of sodium (symport system). The chain is Serine/threonine transporter SstT from Streptococcus agalactiae serotype III (strain NEM316).